Consider the following 311-residue polypeptide: Ribosomal protein L11 methyltransferase (311 aa).

S-adenosyl-L-methionine is bound by residues Thr162, Gly183, Asp205, and Asn248.

The protein belongs to the methyltransferase superfamily. PrmA family.

The protein localises to the cytoplasm. The enzyme catalyses L-lysyl-[protein] + 3 S-adenosyl-L-methionine = N(6),N(6),N(6)-trimethyl-L-lysyl-[protein] + 3 S-adenosyl-L-homocysteine + 3 H(+). Its function is as follows. Methylates ribosomal protein L11. This is Ribosomal protein L11 methyltransferase from Bacillus subtilis (strain 168).